Consider the following 179-residue polypeptide: Cytochrome c-type biogenesis protein CcmE (179 aa).

Over 1–8 (MNPRRKSR) the chain is Cytoplasmic. The helical; Signal-anchor for type II membrane protein transmembrane segment at 9-29 (LTIILFVLLGVTIASSLVLYA) threads the bilayer. Topologically, residues 30–179 (LRQNIDLFYT…AVNSVEEGKK (150 aa)) are periplasmic. Heme is bound by residues histidine 131 and tyrosine 135. Composition is skewed to basic and acidic residues over residues 138–148 (PDLSEKMEQVH) and 161–179 (ESDR…EGKK). The interval 138-179 (PDLSEKMEQVHKPMGISNQDMQGESDRDRLDKAVNSVEEGKK) is disordered.

The protein belongs to the CcmE/CycJ family.

It localises to the cell inner membrane. Functionally, heme chaperone required for the biogenesis of c-type cytochromes. Transiently binds heme delivered by CcmC and transfers the heme to apo-cytochromes in a process facilitated by CcmF and CcmH. This Mannheimia succiniciproducens (strain KCTC 0769BP / MBEL55E) protein is Cytochrome c-type biogenesis protein CcmE.